A 95-amino-acid chain; its full sequence is Probable FAD-linked sulfhydryl oxidase OPG072 (95 aa).

The Intravirion segment spans residues M1–R8. The ERV/ALR sulfhydryl oxidase domain maps to M1–L95. The helical transmembrane segment at A9–G25 threads the bilayer. The Virion surface portion of the chain corresponds to N26–L95. Residues C43 and C46 are joined by a disulfide bond.

Belongs to the orthopoxvirus OPG072 family. Interacts with OPG128; this interaction involves formation of a transient disulfide-bonded intermediate, allowing disulfide bond transfer. It depends on FAD as a cofactor.

It is found in the virion membrane. It localises to the host cytoplasm. The enzyme catalyses 2 R'C(R)SH + O2 = R'C(R)S-S(R)CR' + H2O2. In terms of biological role, FAD-dependent sulfhydryl oxidase that catalyzes disulfide bond formation. The complete pathway for formation of disulfide bonds in intracellular virion membrane proteins sequentially involves thiol-disulfide transfer between OPG072, OPG128 and OPG088. The protein is Probable FAD-linked sulfhydryl oxidase OPG072 (OPG072) of Variola virus (isolate Human/India/Ind3/1967) (VARV).